A 282-amino-acid chain; its full sequence is Undecaprenyl-diphosphatase (282 aa).

Helical transmembrane passes span 7-29, 45-65, 89-109, 115-135, 153-173, 196-216, 229-249, and 258-278; these read VLFAILQGATELFPVSSLGHVVI, FLPFVVMLHVGTATALLLYFW, GLLLRLVVATLPAVLIGFALK, LFASPEIAAAFLIANGAVLII, LTLRDSLVIGLFQCLAFLPGL, FAFLMATPVIAGAAVIEVPHL, TALLAAVVAGVVAYLSTAFLM, and WALGPFAAYCALFGALSLILI.

The protein belongs to the UppP family.

Its subcellular location is the cell inner membrane. It catalyses the reaction di-trans,octa-cis-undecaprenyl diphosphate + H2O = di-trans,octa-cis-undecaprenyl phosphate + phosphate + H(+). Catalyzes the dephosphorylation of undecaprenyl diphosphate (UPP). Confers resistance to bacitracin. The chain is Undecaprenyl-diphosphatase from Acidiphilium cryptum (strain JF-5).